The sequence spans 130 residues: Methylglyoxal synthase (130 aa).

The MGS-like domain occupies 1–130 (MSKPRIALIA…DLARNMQDVC (130 aa)). Residues H11, K15, 37–40 (TGTT), and 57–58 (SG) each bind substrate. D63 functions as the Proton donor/acceptor in the catalytic mechanism. Residue H90 participates in substrate binding.

Belongs to the methylglyoxal synthase family.

The enzyme catalyses dihydroxyacetone phosphate = methylglyoxal + phosphate. Its function is as follows. Catalyzes the formation of methylglyoxal from dihydroxyacetone phosphate. The polypeptide is Methylglyoxal synthase (Burkholderia lata (strain ATCC 17760 / DSM 23089 / LMG 22485 / NCIMB 9086 / R18194 / 383)).